The primary structure comprises 78 residues: Large ribosomal subunit protein bL28 (78 aa).

This sequence belongs to the bacterial ribosomal protein bL28 family.

This Pseudomonas aeruginosa (strain LESB58) protein is Large ribosomal subunit protein bL28.